The chain runs to 655 residues: Katanin p80 WD40 repeat-containing subunit B1 (655 aa).

WD repeat units follow at residues 18 to 58, 61 to 100, 103 to 142, 145 to 184, 187 to 226, and 229 to 269; these read AHGS…CIMS, GHTT…ILRT, GHKA…CVFR, GHTQ…MMAE, EHKG…LIGC, and GETI…DTVP. The segment at 316-453 is disordered; that stretch reads VPAEMPISQP…PVPAPQSKPP (138 aa). Basic and acidic residues predominate over residues 358-374; that stretch reads KESRAEIQNPEDYKEIF. The span at 415-426 shows a compositional bias: polar residues; the sequence is PATSNKNNTEQL.

The protein belongs to the WD repeat KATNB1 family. In terms of assembly, interacts with katna1. This interaction enhances the microtubule binding and severing activity of katna1 and also targets this activity to the centrosome.

It is found in the cytoplasm. It localises to the cytoskeleton. The protein resides in the microtubule organizing center. Its subcellular location is the centrosome. The protein localises to the spindle pole. It is found in the spindle. Participates in a complex which severs microtubules in an ATP-dependent manner. May act to target the enzymatic subunit of this complex to sites of action such as the centrosome. Microtubule severing may promote rapid reorganization of cellular microtubule arrays and the release of microtubules from the centrosome following nucleation. In Xenopus tropicalis (Western clawed frog), this protein is Katanin p80 WD40 repeat-containing subunit B1 (katnb1).